A 32-amino-acid polypeptide reads, in one-letter code: Delta-conotoxin-like CnVIC (32 aa).

Disulfide bonds link cysteine 3-cysteine 18, cysteine 10-cysteine 22, and cysteine 17-cysteine 27. Residues proline 6 and proline 14 each carry the 4-hydroxyproline modification.

Belongs to the conotoxin O1 superfamily. Expressed by the venom duct.

It localises to the secreted. Its function is as follows. Delta-conotoxins bind to site 6 of voltage-gated sodium channels (Nav) and inhibit the inactivation process. This toxin acts on Nav1.2/SCN2A, Nav1.4/SCN4A, Nav1.5/SCN5A (weak activity), Nav1.6/SCN8A (EC(50)=2.5 uM). The polypeptide is Delta-conotoxin-like CnVIC (Conus consors (Singed cone)).